Consider the following 111-residue polypeptide: Carboxysome shell protein CcmK1 (111 aa).

The 87-residue stretch at 4–90 (AVGMIETLGF…PHENLEYVLP (87 aa)) folds into the BMC domain.

Belongs to the bacterial microcompartments protein family. CcmK subfamily. Homohexamer. Interacts with full-length CcmM. Forms mixed heterohexamers of all possible stoichiometries with CcmK2, which might form dodecamers. Only very weak interactions with CcmK3 and CcmK4 were seen. Interacts with CcmN and CcmO in the carboxysome.

The protein resides in the carboxysome. Functionally, one of the shell proteins of the carboxysome, a polyhedral inclusion where RuBisCO (ribulose bisphosphate carboxylase, rbcL-rbcS) is sequestered. Assembles into hexamers which make sheets that form the facets of the polyhedral carboxysome. The hexamer central pore probably regulates metabolite flux. Its function is as follows. Probably the major shell protein of the carboxysome, a polyhedral inclusion where RuBisCO (ribulose bisphosphate carboxylase, rbcL-rbcS) is sequestered. The central pore probably regulates metabolite flux. Hexamers make sheets that form the facets of the carboxysome. The sequence is that of Carboxysome shell protein CcmK1 from Synechocystis sp. (strain ATCC 27184 / PCC 6803 / Kazusa).